Here is a 251-residue protein sequence, read N- to C-terminus: RING-H2 finger protein ATL10 (251 aa).

A helical transmembrane segment spans residues methionine 59 to isoleucine 79. Residues cysteine 135–arginine 177 form an RING-type; atypical zinc finger.

This sequence belongs to the RING-type zinc finger family. ATL subfamily.

Its subcellular location is the membrane. The enzyme catalyses S-ubiquitinyl-[E2 ubiquitin-conjugating enzyme]-L-cysteine + [acceptor protein]-L-lysine = [E2 ubiquitin-conjugating enzyme]-L-cysteine + N(6)-ubiquitinyl-[acceptor protein]-L-lysine.. Its pathway is protein modification; protein ubiquitination. This Arabidopsis thaliana (Mouse-ear cress) protein is RING-H2 finger protein ATL10 (ATL10).